The chain runs to 62 residues: Ferredoxin-2 (62 aa).

2 4Fe-4S ferredoxin-type domains span residues 2-28 (AHRITDECTYCAACEPECPVSAISAGD) and 29-62 (SIYVIDENVCVDCIGYHDEPACVAVCPVDCIIKV). [4Fe-4S] cluster contacts are provided by Cys-9, Cys-12, Cys-15, Cys-19, Cys-38, Cys-41, Cys-50, and Cys-54.

It depends on [4Fe-4S] cluster as a cofactor.

Functionally, ferredoxins are iron-sulfur proteins that transfer electrons in a wide variety of metabolic reactions. This chain is Ferredoxin-2, found in Chlorobaculum tepidum (strain ATCC 49652 / DSM 12025 / NBRC 103806 / TLS) (Chlorobium tepidum).